The chain runs to 578 residues: MLSCDICGETVTSEPDMKAHLIVHMENEIVCPFCKLSGVSYDEMCFHIETAHFEQNTLERNFERINTVQFGTSDNKKDNTLQCGMEVNSSILSGCASNHPKNSSQCLTKDSTLKHETFYSENLTESRKFLKSREKQSGLTEVKGSIYETTYGPPECPFCGKIEEHSEDMETHVKTTHANLLDISLEDCDQPLYDCPMCGLICTNYHILQEHVDLHLEENSFCQGMDRVQCSGDLQLAHQLQQEEDRKRRSEESRQEIEEFQKLQRQYGLDNSGGYKQQQLRNMEIEVNRGRMPPSEFHRRKADMMESLAIGIDDGKTKTSGIIEALHRYYQNAATDVRQVWLSSVVDHFHSSLGDKGWGCGYRNFQMLLSSLLQNDAYDDCLKGMSVPCIPKIQSMIEDAWKEGFDPQGASQLNNRLQGTKAWIGACEVYILLTSLRVKCHIVDFHKSTGPLGTHPRLFEWILNYYSSEGEGSPKVVCTSKPPIYLQHQGHSRTVIGIEEKKNRTLCLLIFDPGCPSREMQKLLKQDVEASSLKQLRKSMGNLKHKQYQIVAVEGALSPEEKVARRQDSQVFTAEKIP.

The C2H2-type 1 zinc finger occupies 2–24; it reads LSCDICGETVTSEPDMKAHLIVH. A C2H2-type 2; atypical zinc finger spans residues 29–52; that stretch reads IVCPFCKLSGVSYDEMCFHIETAH. C2H2-type zinc fingers lie at residues 154–177 and 193–215; these read PECPFCGKIEEHSEDMETHVKTTH and YDCPMCGLICTNYHILQEHVDLH. Residues 226–248 form an MIU region; sequence DRVQCSGDLQLAHQLQQEEDRKR. The interval 249-274 is zUBD/ZHA; the sequence is RSEESRQEIEEFQKLQRQYGLDNSGG. N6-acetyllysine is present on lysine 262. Catalysis depends on cysteine 360, which acts as the Nucleophile. Residue histidine 491 is the Proton acceptor of the active site. Aspartate 512 is an active-site residue.

Belongs to the peptidase C78 family. ZUFSP subfamily. As to quaternary structure, interacts with RPA1 and RPA2.

It localises to the cytoplasm. It is found in the nucleus. The enzyme catalyses Thiol-dependent hydrolysis of ester, thioester, amide, peptide and isopeptide bonds formed by the C-terminal Gly of ubiquitin (a 76-residue protein attached to proteins as an intracellular targeting signal).. Its function is as follows. Deubiquitinase with endodeubiquitinase activity that specifically interacts with and cleaves 'Lys-63'-linked long polyubiquitin chains. Shows only weak activity against 'Lys-11' and 'Lys-48'-linked chains. Plays an important role in genome stability pathways, functioning to prevent spontaneous DNA damage and also promote cellular survival in response to exogenous DNA damage. Modulates the ubiquitination status of replication protein A (RPA) complex proteins in response to replication stress. The polypeptide is Zinc finger-containing ubiquitin peptidase 1 (Macaca fascicularis (Crab-eating macaque)).